The sequence spans 748 residues: CCR4-NOT transcription complex subunit 10-A (748 aa).

Over residues 1-17 (MAADKAGEQGAEKHEDS) the composition is skewed to basic and acidic residues. 4 disordered regions span residues 1 to 25 (MAAD…GISD), 184 to 205 (SNNK…EPFA), 483 to 524 (KQEN…PPSS), and 605 to 635 (VSLG…QMPQ). Residues 185 to 200 (NNKNGKNNETNSNANN) show a composition bias toward low complexity. Composition is skewed to polar residues over residues 487 to 509 (GSKT…VCSN) and 605 to 615 (VSLGVSSNEQE).

This sequence belongs to the CNOT10 family. As to quaternary structure, component of the CCR4-NOT complex. cnot10 and cnot11 form a subcomplex docked to the cnot1 scaffold.

The protein resides in the cytoplasm. It localises to the nucleus. Its function is as follows. Component of the CCR4-NOT complex which is one of the major cellular mRNA deadenylases and is linked to various cellular processes including bulk mRNA degradation, miRNA-mediated repression, translational repression during translational initiation and general transcription regulation. Additional complex functions may be a consequence of its influence on mRNA expression. Is not required for association of CNOT7 to the CCR4-NOT complex. The polypeptide is CCR4-NOT transcription complex subunit 10-A (cnot10-a) (Xenopus laevis (African clawed frog)).